Here is a 780-residue protein sequence, read N- to C-terminus: Carboxysome assembly protein CsoS2 (780 aa).

Residues 1-15 are compositionally biased toward basic and acidic residues; it reads MARLSSRELALERRK. Disordered stretches follow at residues 1–173, 189–212, 226–281, 330–349, and 382–444; these read MARL…RAIE, KHGK…NPDL, TKAG…NRSV, NRVT…DEPG, and SLTQ…TGVT. Residues 5–24 form an N-repeat 1 repeat; the sequence is SSRELALERRKALTTSGKKS. Residues 48-78 show a composition bias toward low complexity; that stretch reads AAAAVEPTAPAVSAPVKPTVSFTPASPSSSS. The N-repeat 2 repeat unit spans residues 86 to 105; sequence PSRDLVLARRDALSRRGKTA. Over residues 86–116 the composition is skewed to basic and acidic residues; that stretch reads PSRDLVLARRDALSRRGKTADTSRDRNRADV. The span at 117 to 130 shows a compositional bias: low complexity; it reads ARQTQAAAPVAASA. N-repeat repeat units follow at residues 175-194 and 213-235; these read PSRA…GKTA and TSRE…NKQS. M-repeat repeat units follow at residues 260-309, 320-369, 378-417, 431-480, 490-535, and 541-599; these read KVGE…QTFC, KVRV…AAYC, KVGH…GDQY, KVGQ…NAFC, KVGF…LENA, and TSAV…ATAC. The segment at 260–608 is middle region; that stretch reads KVGESTTSTG…CGNEAPAGTD (349 aa). Residues 264–276 are compositionally biased toward low complexity; that stretch reads STTSTGQTVTGTQ. 2 stretches are compositionally biased toward low complexity: residues 387-403 and 432-444; these read GRPV…SVTG and VGQS…TGVT. The interval 609-749 is C-terminal domain; it reads SHGQAPEGAA…ATVPHERKRN (141 aa). C-repeat repeat units lie at residues 623–669 and 693–726; these read SVMS…TEQF and EQPA…EGVS. Disordered regions lie at residues 631-661 and 686-780; these read AQQQ…LAGG and AVVS…GARG. A compositionally biased stretch (polar residues) spans 641 to 651; that stretch reads VTGTSYEQGNR. Residues 709–720 are compositionally biased toward basic and acidic residues; that stretch reads TGDDWDRGEHVT. Residues 750-780 are C-terminal peptide; that stretch reads EENEWPVSRVTGSSGNTEKGSLITVSGGARG. Over residues 759–768 the composition is skewed to polar residues; sequence VTGSSGNTEK.

The protein belongs to the CsoS2 family. In terms of assembly, interacts via its N-terminal repeats with RuBisCO. Interacts with the major shell protein CsoS1. Post-translationally, unlike H.neapolitanus and predictions for P.marinus strain MIT 9313, this protein is not thought to have ribosomal frameshifting.

In terms of biological role, required for alpha-carboxysome (Cb) assembly, mediates interaction between RuBisCO and the carboxysome shell. The protein is probably intrinsically disordered. The C-terminal repeats act as the encapsulation signal to target proteins to the Cb; they are necessary and sufficient to target both CsoS2 and foreign proteins to the Cb. The N-terminal repeats of this protein bind simultaneously to both subunits of RuBisCO. Probably also interacts with the major shell proteins (CsoS1); that interaction would increase the local concentration of CsoS2 so that it can condense RuBisCO and full carboxysomes can be formed. The polypeptide is Carboxysome assembly protein CsoS2 (Parasynechococcus marenigrum (strain WH8102)).